Reading from the N-terminus, the 210-residue chain is Thymidylate kinase (210 aa).

11–18 is a binding site for ATP; it reads GVDGAGKT.

This sequence belongs to the thymidylate kinase family.

It carries out the reaction dTMP + ATP = dTDP + ADP. Functionally, phosphorylation of dTMP to form dTDP in both de novo and salvage pathways of dTTP synthesis. The polypeptide is Thymidylate kinase (tmk) (Mycoplasma genitalium (strain ATCC 33530 / DSM 19775 / NCTC 10195 / G37) (Mycoplasmoides genitalium)).